The primary structure comprises 169 residues: 3-hydroxyacyl-[acyl-carrier-protein] dehydratase FabZ (169 aa).

His66 is a catalytic residue.

The protein belongs to the thioester dehydratase family. FabZ subfamily.

The protein localises to the cytoplasm. It carries out the reaction a (3R)-hydroxyacyl-[ACP] = a (2E)-enoyl-[ACP] + H2O. Functionally, involved in unsaturated fatty acids biosynthesis. Catalyzes the dehydration of short chain beta-hydroxyacyl-ACPs and long chain saturated and unsaturated beta-hydroxyacyl-ACPs. The protein is 3-hydroxyacyl-[acyl-carrier-protein] dehydratase FabZ of Helicobacter hepaticus (strain ATCC 51449 / 3B1).